The primary structure comprises 462 residues: UDP-N-acetylmuramoylalanine--D-glutamate ligase (462 aa).

Residue 117-123 (GTNGKTT) coordinates ATP.

It belongs to the MurCDEF family.

It localises to the cytoplasm. It carries out the reaction UDP-N-acetyl-alpha-D-muramoyl-L-alanine + D-glutamate + ATP = UDP-N-acetyl-alpha-D-muramoyl-L-alanyl-D-glutamate + ADP + phosphate + H(+). The protein operates within cell wall biogenesis; peptidoglycan biosynthesis. In terms of biological role, cell wall formation. Catalyzes the addition of glutamate to the nucleotide precursor UDP-N-acetylmuramoyl-L-alanine (UMA). The protein is UDP-N-acetylmuramoylalanine--D-glutamate ligase of Synechococcus sp. (strain CC9902).